We begin with the raw amino-acid sequence, 403 residues long: L-cysteine:1D-myo-inositol 2-amino-2-deoxy-alpha-D-glucopyranoside ligase (403 aa).

Cys-43 lines the Zn(2+) pocket. L-cysteinyl-5'-AMP contacts are provided by residues 43–46, Thr-58, and 81–83; these read CGIT and NTT. Residues 45 to 55 carry the 'HIGH' region motif; that stretch reads ITPYDATHLGH. The short motif at 183-188 is the 'ERGGDP' region element; that stretch reads ERGGDP. Residue Trp-223 participates in L-cysteinyl-5'-AMP binding. Residue Cys-227 coordinates Zn(2+). Position 245–247 (245–247) interacts with L-cysteinyl-5'-AMP; it reads GSD. Residue His-252 participates in Zn(2+) binding. L-cysteinyl-5'-AMP is bound at residue Val-279. Positions 285 to 289 match the 'KMSKS' region motif; that stretch reads KMSKS.

It belongs to the class-I aminoacyl-tRNA synthetase family. MshC subfamily. In terms of assembly, monomer. Zn(2+) serves as cofactor.

The catalysed reaction is 1D-myo-inositol 2-amino-2-deoxy-alpha-D-glucopyranoside + L-cysteine + ATP = 1D-myo-inositol 2-(L-cysteinylamino)-2-deoxy-alpha-D-glucopyranoside + AMP + diphosphate + H(+). Its function is as follows. Catalyzes the ATP-dependent condensation of GlcN-Ins and L-cysteine to form L-Cys-GlcN-Ins. This is L-cysteine:1D-myo-inositol 2-amino-2-deoxy-alpha-D-glucopyranoside ligase from Thermobispora bispora (strain ATCC 19993 / DSM 43833 / CBS 139.67 / JCM 10125 / KCTC 9307 / NBRC 14880 / R51).